The sequence spans 126 residues: Calcitonin receptor-stimulating peptide 1 (126 aa).

Positions 1-25 are cleaved as a signal peptide; that stretch reads MGFWKFPPFLVLSILVLYQAGMFHT. Positions 26–78 are excised as a propeptide; the sequence is APMRSAFGSPFDPATLSEEESRLLLAAMVNDYEQMKAREMQKQRAQGSGISVQ. Cysteine 82 and cysteine 87 are joined by a disulfide. Glycine 118 carries the glycine amide modification. A propeptide spanning residues 123 to 126 is cleaved from the precursor; the sequence is NFWI.

As to expression, mainly expressed in the thyroid gland and CNS. Found in the nerve cells of cerebrum, hippocampus, hypothalamus, pons/midbrain and thalamus.

It localises to the secreted. Its function is as follows. Stimulates cAMP production in porcine kidney cell line LLC-PK1 via the calcitonin receptor (CT) but not via the CT-like (CL) receptor. This is Calcitonin receptor-stimulating peptide 1 (CRSP1) from Sus scrofa (Pig).